Here is a 319-residue protein sequence, read N- to C-terminus: Protease HtpX homolog (319 aa).

The next 2 membrane-spanning stretches (helical) occupy residues 3-23 and 32-52; these read LTVL…AWAL and TGVA…QWLF. His-134 is a binding site for Zn(2+). Residue Glu-135 is part of the active site. His-138 is a Zn(2+) binding site. Transmembrane regions (helical) follow at residues 146–166 and 182–202; these read VILA…TLVW and MALV…QLIV. Glu-210 contacts Zn(2+).

Belongs to the peptidase M48B family. Zn(2+) serves as cofactor.

It is found in the cell membrane. The protein is Protease HtpX homolog of Aeropyrum pernix (strain ATCC 700893 / DSM 11879 / JCM 9820 / NBRC 100138 / K1).